We begin with the raw amino-acid sequence, 397 residues long: Iripin-2 (397 aa).

An N-terminal signal peptide occupies residues 1 to 21; sequence MEDFKMKTLAAFLSLLVLCWA. N-linked (GlcNAc...) asparagine glycosylation is found at Asn-109 and Asn-270.

The protein belongs to the serpin family. As to quaternary structure, interacts with mouse MCPT4. Female salivary gland. Ovary. Midgut.

Its subcellular location is the secreted. Functionally, serine protease inhibitor that modulates blood feeding of ticks on vertebrate species. Inhibits host trypsin, thrombin (F2), alpha-chymotrypsin, cathepsin G (CTSG) and mast cell chymase (CMA1). Inhibits host cathepsin G- and thrombin-induced platelet aggregation. Inhibits acute inflammation in the host. Suppresses neutrophil recruitment in inflamed area. Does not inhibit host plasmin (PLG), factor Xa (F10), factor XIa (F11), elastase and proteinase 3/myeloblastin (PRTN3). (Microbial infection) Inhibits IL6 production by mouse splenic dendritic cells in response to Borrelia burgdorferi exposure. Decreases levels of STAT3 phosphorylation in mouse splenic dendritic cells in response to Borrelia burgdorferi exposure and in Borrelia-primed CD4+ T-lymphocytes. Inhibits differentiation of mouse Th17 cells, a subset of CD4+ T-lymphocytes that play a crucial role in protection against extracellular bacteria, in response to Borrelia burgdorferi exposure via inhibition of the IL6/STAT3 signaling pathway. This chain is Iripin-2, found in Ixodes ricinus (Common tick).